A 206-amino-acid chain; its full sequence is Large ribosomal subunit protein eL13y (206 aa).

Residues 182–206 are disordered; it reads LERTNKRHAGARAKRAADAEKEEKK. Positions 186 to 195 are enriched in basic residues; the sequence is NKRHAGARAK. Basic and acidic residues predominate over residues 196 to 206; that stretch reads RAADAEKEEKK.

This sequence belongs to the eukaryotic ribosomal protein eL13 family.

This chain is Large ribosomal subunit protein eL13y, found in Brassica napus (Rape).